The following is a 225-amino-acid chain: MPITSSSETFASFFNDWLCRHRQFVQQLAHLADETTIVTPIEEESLVSNFLSHYLQYYEEKSVAMSVAGDDIYDFFSPPWLSSYEKLILWIGGFKPGMVFKLITTSVNDLTSHQIDQLESIRLETKRRERDLMRRFALLQQSVGDPLLMVPFRRIGVLRLGEGEQPEMEDAMEVLKVEMIKAMKNADQLRCVTVGKVVEVLNPRQSIKLLRAAGEFYLRLRDLGV.

A DOG1 domain is found at 7–225; the sequence is SETFASFFND…FYLRLRDLGV (219 aa).

May be involved in the regulation of abscisic acid (ABA) sensitivity. The chain is Protein ZW2 from Arabidopsis thaliana (Mouse-ear cress).